A 470-amino-acid chain; its full sequence is Retinoic acid receptor RXR-gamma (470 aa).

Residues methionine 1 to isoleucine 145 are modulating. 2 NR C4-type zinc fingers span residues cysteine 146–cysteine 166 and cysteine 182–cysteine 206. Residues cysteine 146–methionine 211 constitute a DNA-binding region (nuclear receptor). Residues lysine 212 to serine 235 form a hinge region. A compositionally biased stretch (basic and acidic residues) spans glutamine 217–threonine 229. The interval glutamine 217 to proline 242 is disordered. The region spanning serine 238–proline 466 is the NR LBD domain.

Belongs to the nuclear hormone receptor family. NR2 subfamily. As to quaternary structure, homodimer. Heterodimer; with a rar molecule. Binds DNA preferentially as a rar/rxr heterodimer.

The protein localises to the nucleus. Functionally, receptor for retinoic acid. Retinoic acid receptors bind as heterodimers to their target response elements in response to their ligands, all-trans or 9-cis retinoic acid, and regulate gene expression in various biological processes. The rar/rxr heterodimers bind to the retinoic acid response elements (RARE) composed of tandem 5'-AGGTCA-3' sites known as DR1-DR5. The high affinity ligand for rxrs is 9-cis retinoic acid. This Xenopus laevis (African clawed frog) protein is Retinoic acid receptor RXR-gamma (rxrg).